Here is a 346-residue protein sequence, read N- to C-terminus: Protein RecA (346 aa).

An ATP-binding site is contributed by 67–74 (GPESSGKT).

Belongs to the RecA family.

The protein resides in the cytoplasm. Its function is as follows. Can catalyze the hydrolysis of ATP in the presence of single-stranded DNA, the ATP-dependent uptake of single-stranded DNA by duplex DNA, and the ATP-dependent hybridization of homologous single-stranded DNAs. It interacts with LexA causing its activation and leading to its autocatalytic cleavage. In Mycobacterium marinum (strain ATCC BAA-535 / M), this protein is Protein RecA.